Here is a 189-residue protein sequence, read N- to C-terminus: Elongation factor P (189 aa).

N6-(3,6-diaminohexanoyl)-5-hydroxylysine is present on Lys-34.

This sequence belongs to the elongation factor P family. In terms of processing, may be beta-lysylated on the epsilon-amino group of Lys-34 by the combined action of EpmA and EpmB, and then hydroxylated on the C5 position of the same residue by EpmC (if this protein is present). Lysylation is critical for the stimulatory effect of EF-P on peptide-bond formation. The lysylation moiety may extend toward the peptidyltransferase center and stabilize the terminal 3-CCA end of the tRNA. Hydroxylation of the C5 position on Lys-34 may allow additional potential stabilizing hydrogen-bond interactions with the P-tRNA.

The protein resides in the cytoplasm. It participates in protein biosynthesis; polypeptide chain elongation. Involved in peptide bond synthesis. Alleviates ribosome stalling that occurs when 3 or more consecutive Pro residues or the sequence PPG is present in a protein, possibly by augmenting the peptidyl transferase activity of the ribosome. Modification of Lys-34 is required for alleviation. This Baumannia cicadellinicola subsp. Homalodisca coagulata protein is Elongation factor P.